Here is a 235-residue protein sequence, read N- to C-terminus: Small ribosomal subunit protein uS2c (235 aa).

This sequence belongs to the universal ribosomal protein uS2 family.

It localises to the plastid. The protein resides in the chloroplast. The chain is Small ribosomal subunit protein uS2c (rps2) from Guillardia theta (Cryptophyte).